A 412-amino-acid polypeptide reads, in one-letter code: Mannose-6-phosphate isomerase (412 aa).

Positions 99, 101, 126, and 265 each coordinate Zn(2+). The active site involves Arg-284.

The protein belongs to the mannose-6-phosphate isomerase type 1 family. Zn(2+) is required as a cofactor.

It is found in the cytoplasm. Its subcellular location is the nucleus. It catalyses the reaction D-mannose 6-phosphate = D-fructose 6-phosphate. It functions in the pathway nucleotide-sugar biosynthesis; GDP-alpha-D-mannose biosynthesis; alpha-D-mannose 1-phosphate from D-fructose 6-phosphate: step 1/2. Its function is as follows. Involved in the synthesis of the GDP-mannose and dolichol-phosphate-mannose required for a number of critical mannosyl transfer reactions. This is Mannose-6-phosphate isomerase (pmi40) from Schizosaccharomyces pombe (strain 972 / ATCC 24843) (Fission yeast).